The sequence spans 628 residues: Chaperone protein HtpG (628 aa).

The segment at 1 to 340 is a; substrate-binding; that stretch reads MKGQETRGFQ…SNDLPLNVSR (340 aa). Positions 341 to 556 are b; that stretch reads EILQDSRVTQ…ADDMTTQMAK (216 aa). The segment at 557–628 is c; it reads LFAAAGQAAP…IRRMNQLLNA (72 aa).

It belongs to the heat shock protein 90 family. As to quaternary structure, homodimer.

The protein localises to the cytoplasm. Its function is as follows. Molecular chaperone. Has ATPase activity. The chain is Chaperone protein HtpG from Sodalis glossinidius (strain morsitans).